Consider the following 264-residue polypeptide: MAPTRRSRDLLRGKNVLIIGGTSGIGFAVAQLVIEHGAMACIAGSNPTKLGKALDALKQHPDRDPIAIVQSATCDLFDVPNLEQNLDNLLKLAAGDSKIHHIVFTAADMVQPPPLASVTIEQIQRVGTIRFTAPMLVAKLLPKYMELCPENSYTLTSGSHAKQPDPGWSLVTGYCGGVEGLMRGLAVDMMPLRVNVVSPGAVLTPVLRDILGDSLEIALDAARKKSTTGRIARPEDVAEAYLYIMKDQNITGTVLETSAGMLLR.

Residues glycine 13–glutamate 35 form a helical membrane-spanning segment. Threonine 22, serine 23, isoleucine 25, serine 45, asparagine 46, lysine 49, aspartate 75, asparagine 88, arginine 130, valine 202, and threonine 204 together coordinate NADP(+). The N-linked (GlcNAc...) asparagine glycan is linked to asparagine 249.

This sequence belongs to the short-chain dehydrogenases/reductases (SDR) family.

The protein resides in the membrane. It carries out the reaction 1-hydroxy-3-{[2-(1,1-dimethylallyl)-indol-3-yl]methyl}-6H,7H,8H-5lambda(5)-pyrrolo[1,2-a]pyrazine + NADPH + H(+) = 1-hydroxy-3-{[2-(1,1-dimethylallyl)-indol-3-yl]methyl}-4H,6H,7H,8H-pyrrolo[1,2-a]pyrazine + NADP(+). It catalyses the reaction 1-hydroxy-3-{[2-(1,1-dimethylallyl)-indol-3-yl]methyl}-4H,6H,7H,8H-pyrrolo[1,2-a]pyrazine = (+)-premalbrancheamide. It participates in alkaloid biosynthesis. Short-chain dehydrogenase/reductase; part of the gene cluster that mediates the biosynthesis of malbrancheamide, a dichlorinated fungal indole alkaloid that belongs to a family of natural products containing a characteristic bicyclo[2.2.2]diazaoctane core. The first step of malbrancheamide biosynthesis involves coupling of L-proline and L-tryptophan by malG, a bimodular NRPS, to produce L-Pro-L-Trp aldehyde through reductive offloading. This compound undergoes spontaneous cyclization and dehydration to give a dienamine which is reverse prenylated at C-2 by malE. The other prenyltransferase present in the cluster, malB, displays modest activity, suggesting that may be a redundant gene in the pathway. Subsequently, a [4+2] Diels-Alder cyclo-addition catalyzed by the bifunctional enzyme malC forms the characteristic bicyclo[2.2.2]diazaoctane ring of premalbrancheamid. The first reaction catalyzed is a NADPH-dependent reduction reaction in which the nicotinamide cofactor is a stoichiometric reagent. Either NADH or NADPH is effective as a cofactor. NADP(+) is required for stereocontrolled formation of premalbrancheamide, however it does not appear to be required as a formal stoichiometric reagent because the second reaction performed by malC, the [4+2] cycloaddition, is a balanced chemical reaction without requirement for hydride transfer to balance the reaction. Finally, the flavin-dependent halogenase malA catalyzes the iterative dichlorination of the indole ring of premalbrancheamide to yield C-9 monochlorinated malbrancheamide B, C-8 monochlorinated isomalbrancheamide B, and dichlorinated malbrancheamide. MalA is also able to brominate premalbrancheamide at C-9 to yield malbrancheamide C, and, to a lesser extend, at C-8 to yield isomalbrancheamide C. Finally, malA can brominate C-9 monochlorinated malbrancheamide B at C-8 to yield malbrancheamide D, or C-8 monochlorinated isomalbrancheamide B at C-9 to produce isomalbrancheamide D. This is Short-chain dehydrogenase/reductase malC from Malbranchea aurantiaca.